A 324-amino-acid polypeptide reads, in one-letter code: Probable cell division protein WhiA (324 aa).

Positions Ser275–Asp308 form a DNA-binding region, H-T-H motif.

This sequence belongs to the WhiA family.

Functionally, involved in cell division and chromosome segregation. In Acidothermus cellulolyticus (strain ATCC 43068 / DSM 8971 / 11B), this protein is Probable cell division protein WhiA.